Here is a 457-residue protein sequence, read N- to C-terminus: Argininosuccinate lyase (457 aa).

The protein belongs to the lyase 1 family. Argininosuccinate lyase subfamily.

The protein localises to the cytoplasm. It carries out the reaction 2-(N(omega)-L-arginino)succinate = fumarate + L-arginine. It functions in the pathway amino-acid biosynthesis; L-arginine biosynthesis; L-arginine from L-ornithine and carbamoyl phosphate: step 3/3. The polypeptide is Argininosuccinate lyase (Escherichia coli O139:H28 (strain E24377A / ETEC)).